Consider the following 248-residue polypeptide: tRNA (guanine-N(1)-)-methyltransferase (248 aa).

S-adenosyl-L-methionine-binding positions include Gly-116 and 136–141; that span reads VGDYVL.

It belongs to the RNA methyltransferase TrmD family. Homodimer.

The protein resides in the cytoplasm. It carries out the reaction guanosine(37) in tRNA + S-adenosyl-L-methionine = N(1)-methylguanosine(37) in tRNA + S-adenosyl-L-homocysteine + H(+). Specifically methylates guanosine-37 in various tRNAs. The chain is tRNA (guanine-N(1)-)-methyltransferase from Psychromonas ingrahamii (strain DSM 17664 / CCUG 51855 / 37).